The sequence spans 161 residues: 6,7-dimethyl-8-ribityllumazine synthase (161 aa).

5-amino-6-(D-ribitylamino)uracil-binding positions include Trp-31, 63–65 (SFE), and 85–87 (VVI). 90-91 (GT) contributes to the (2S)-2-hydroxy-3-oxobutyl phosphate binding site. The active-site Proton donor is His-93. Phe-118 contributes to the 5-amino-6-(D-ribitylamino)uracil binding site. Position 132 (Arg-132) interacts with (2S)-2-hydroxy-3-oxobutyl phosphate.

It belongs to the DMRL synthase family.

The catalysed reaction is (2S)-2-hydroxy-3-oxobutyl phosphate + 5-amino-6-(D-ribitylamino)uracil = 6,7-dimethyl-8-(1-D-ribityl)lumazine + phosphate + 2 H2O + H(+). Its pathway is cofactor biosynthesis; riboflavin biosynthesis; riboflavin from 2-hydroxy-3-oxobutyl phosphate and 5-amino-6-(D-ribitylamino)uracil: step 1/2. Its function is as follows. Catalyzes the formation of 6,7-dimethyl-8-ribityllumazine by condensation of 5-amino-6-(D-ribitylamino)uracil with 3,4-dihydroxy-2-butanone 4-phosphate. This is the penultimate step in the biosynthesis of riboflavin. The sequence is that of 6,7-dimethyl-8-ribityllumazine synthase from Pseudarthrobacter chlorophenolicus (strain ATCC 700700 / DSM 12829 / CIP 107037 / JCM 12360 / KCTC 9906 / NCIMB 13794 / A6) (Arthrobacter chlorophenolicus).